A 113-amino-acid polypeptide reads, in one-letter code: U11-theraphotoxin-Hhn1f (113 aa).

An N-terminal signal peptide occupies residues 1-21 (MNTVRVTFLLVFVLAVSLGQA). A propeptide spanning residues 22-74 (DKDENRMEMQEKTEQGKSYLDFAENLLLQKLEELEAKLLEEDSKESRNSRQKR) is cleaved from the precursor. Positions 61-82 (EEDSKESRNSRQKRCIGEGVPC) are disordered. Disulfide bonds link Cys-75/Cys-90, Cys-82/Cys-95, and Cys-89/Cys-110.

This sequence belongs to the neurotoxin 14 (magi-1) family. 01 (HNTX-16) subfamily. As to expression, expressed by the venom gland.

Its subcellular location is the secreted. Probable ion channel inhibitor. This is U11-theraphotoxin-Hhn1f from Cyriopagopus hainanus (Chinese bird spider).